The sequence spans 152 residues: MAGKHTQLEELIAPVVESLECELWGLEYSVQGRRSMLRIFIDKQPDGVLVEDCEKVSRQVSSVLDVEDPISGEYTLEVSSPGMDRPLFKLAHFELYVGHRVALRLRVAFEGRRKFQGLLKGIEDGEIVLEVGEEEYLLPFELIDKANVVPQF.

This sequence belongs to the RimP family.

It localises to the cytoplasm. Required for maturation of 30S ribosomal subunits. The protein is Ribosome maturation factor RimP of Teredinibacter turnerae (strain ATCC 39867 / T7901).